We begin with the raw amino-acid sequence, 321 residues long: L-Ala-D/L-Glu epimerase (321 aa).

Substrate-binding residues include T124 and K149. The Proton acceptor; specific for (R)-substrate epimerization role is filled by K151. Mg(2+)-binding residues include D176, E202, and D225. K247 functions as the Proton acceptor; specific for (S)-substrate epimerization in the catalytic mechanism. Positions 275, 297, and 299 each coordinate substrate.

Belongs to the mandelate racemase/muconate lactonizing enzyme family. Monomer. Requires Mg(2+) as cofactor.

The enzyme catalyses L-alanyl-L-glutamate = L-alanyl-D-glutamate. The protein operates within cell wall biogenesis; peptidoglycan recycling. Its function is as follows. Catalyzes the epimerization of L-Ala-D-Glu to L-Ala-L-Glu and has a role in the recycling of the murein peptide, of which L-Ala-D-Glu is a component. Is also able to catalyze the reverse reaction and the epimerization of all the L-Ala-X dipeptides, except L-Ala-L-Arg, L-Ala-L-Lys and L-Ala-L-Pro. Is also active with L-Gly-L-Glu, L-Phe-L-Glu, and L-Ser-L-Glu, but not with L-Glu-L-Glu, L-Lys-L-Glu, L-Pro-L-Glu, L-Lys-L-Ala, or D-Ala-D-Ala. This Escherichia coli (strain K12) protein is L-Ala-D/L-Glu epimerase (ycjG).